A 185-amino-acid chain; its full sequence is Transcription factor E (185 aa).

The HTH TFE/IIEalpha-type domain maps to 5–88 (KNKELLEIAQ…YWRLETKKLP (84 aa)).

The protein belongs to the TFE family. In terms of assembly, monomer. Interaction with RNA polymerase subunits RpoF and RpoE is necessary for Tfe stimulatory transcription activity. Able to interact with Tbp and RNA polymerase in the absence of DNA promoter. Interacts both with the preinitiation and elongation complexes.

Its function is as follows. Transcription factor that plays a role in the activation of archaeal genes transcribed by RNA polymerase. Facilitates transcription initiation by enhancing TATA-box recognition by TATA-box-binding protein (Tbp), and transcription factor B (Tfb) and RNA polymerase recruitment. Not absolutely required for transcription in vitro, but particularly important in cases where Tbp or Tfb function is not optimal. It dynamically alters the nucleic acid-binding properties of RNA polymerases by stabilizing the initiation complex and destabilizing elongation complexes. Seems to translocate with the RNA polymerase following initiation and acts by binding to the non template strand of the transcription bubble in elongation complexes. The protein is Transcription factor E of Thermococcus kodakarensis (strain ATCC BAA-918 / JCM 12380 / KOD1) (Pyrococcus kodakaraensis (strain KOD1)).